A 450-amino-acid polypeptide reads, in one-letter code: Molybdate-anion transporter (450 aa).

A run of 12 helical transmembrane segments spans residues 1 to 21, 43 to 63, 79 to 99, 128 to 148, 174 to 194, 195 to 215, 249 to 269, 278 to 298, 311 to 331, 344 to 364, 376 to 396, and 409 to 429; these read MLVT…GLEL, LDFY…APYL, ILYV…SSLV, FVLL…FSAF, AAFW…AVAS, WIGL…ALAG, VLLL…FVFL, GAPL…GSSL, PMHL…MLTF, FIAF…MSFL, GVLN…LLVL, and FSIC…LFTV.

The protein belongs to the major facilitator superfamily.

The protein resides in the cell membrane. In terms of biological role, mediates high-affinity intracellular uptake of the rare oligo-element molybdenum. The polypeptide is Molybdate-anion transporter (MFSD5) (Pongo abelii (Sumatran orangutan)).